Reading from the N-terminus, the 81-residue chain is UPF0180 protein ABC2430 (81 aa).

It belongs to the UPF0180 family.

This Shouchella clausii (strain KSM-K16) (Alkalihalobacillus clausii) protein is UPF0180 protein ABC2430.